Here is a 96-residue protein sequence, read N- to C-terminus: Co-chaperonin GroES (96 aa).

It belongs to the GroES chaperonin family. Heptamer of 7 subunits arranged in a ring. Interacts with the chaperonin GroEL.

It is found in the cytoplasm. Its function is as follows. Together with the chaperonin GroEL, plays an essential role in assisting protein folding. The GroEL-GroES system forms a nano-cage that allows encapsulation of the non-native substrate proteins and provides a physical environment optimized to promote and accelerate protein folding. GroES binds to the apical surface of the GroEL ring, thereby capping the opening of the GroEL channel. This is Co-chaperonin GroES from Acidithiobacillus ferrooxidans (strain ATCC 23270 / DSM 14882 / CIP 104768 / NCIMB 8455) (Ferrobacillus ferrooxidans (strain ATCC 23270)).